The primary structure comprises 490 residues: Glutamate--tRNA ligase 1 (490 aa).

The 'HIGH' region motif lies at 27 to 37 (PSPTGYLHIGG). The 'KMSKS' region motif lies at 254–258 (KLSKR). An ATP-binding site is contributed by K257.

This sequence belongs to the class-I aminoacyl-tRNA synthetase family. Glutamate--tRNA ligase type 1 subfamily. Monomer.

Its subcellular location is the cytoplasm. It catalyses the reaction tRNA(Glu) + L-glutamate + ATP = L-glutamyl-tRNA(Glu) + AMP + diphosphate. Catalyzes the attachment of glutamate to tRNA(Glu) in a two-step reaction: glutamate is first activated by ATP to form Glu-AMP and then transferred to the acceptor end of tRNA(Glu). The protein is Glutamate--tRNA ligase 1 of Sphingopyxis alaskensis (strain DSM 13593 / LMG 18877 / RB2256) (Sphingomonas alaskensis).